An 86-amino-acid polypeptide reads, in one-letter code: Centromere protein W (86 aa).

This sequence belongs to the CENP-W/WIP1 family. As to quaternary structure, heterodimer with CENPT; this dimer coassembles with CENPS-CENPX heterodimers at centromeres to form the tetrameric CENP-T-W-S-X complex, which is a subcomplex of the large constitutive centromere-associated network (CCAN, also known as the interphase centromere complex or ICEN). Interacts with NPM1.

The protein localises to the nucleus. Its subcellular location is the chromosome. It is found in the centromere. It localises to the kinetochore. The protein resides in the nucleus matrix. The protein localises to the nucleolus. In terms of biological role, component of the CENPA-NAC (nucleosome-associated) complex, a complex that plays a central role in assembly of kinetochore proteins, mitotic progression and chromosome segregation. The CENPA-NAC complex recruits the CENPA-CAD (nucleosome distal) complex and may be involved in incorporation of newly synthesized CENPA into centromeres. Part of a nucleosome-associated complex that binds specifically to histone H3-containing nucleosomes at the centromere, as opposed to nucleosomes containing CENPA. Component of the heterotetrameric CENP-T-W-S-X complex that binds and supercoils DNA, and plays an important role in kinetochore assembly. CENPW has a fundamental role in kinetochore assembly and function. It is one of the inner kinetochore proteins, with most further proteins binding downstream. Required for normal chromosome organization and normal progress through mitosis. The polypeptide is Centromere protein W (Cenpw) (Rattus norvegicus (Rat)).